The chain runs to 220 residues: Glycerol-3-phosphate acyltransferase (220 aa).

Helical transmembrane passes span 4–24 (LTIL…AVLV), 53–73 (VAAL…VYLA), 80–100 (PVYL…PIFF), 116–136 (MPIG…VLLV), and 138–158 (GYSS…TYLI). A disordered region spans residues 193-220 (WGRQAQRRQEEVGEMDDVAQKRDERDKK). Positions 210–220 (VAQKRDERDKK) are enriched in basic and acidic residues.

Belongs to the PlsY family. As to quaternary structure, probably interacts with PlsX.

The protein resides in the cell inner membrane. The enzyme catalyses an acyl phosphate + sn-glycerol 3-phosphate = a 1-acyl-sn-glycero-3-phosphate + phosphate. Its pathway is lipid metabolism; phospholipid metabolism. Catalyzes the transfer of an acyl group from acyl-phosphate (acyl-PO(4)) to glycerol-3-phosphate (G3P) to form lysophosphatidic acid (LPA). This enzyme utilizes acyl-phosphate as fatty acyl donor, but not acyl-CoA or acyl-ACP. This chain is Glycerol-3-phosphate acyltransferase, found in Aeromonas salmonicida (strain A449).